We begin with the raw amino-acid sequence, 284 residues long: D-tagatose-1,6-bisphosphate aldolase subunit GatY (284 aa).

Asp82 acts as the Proton donor in catalysis. The Zn(2+) site is built by His83 and His180. Position 181 (Gly181) interacts with dihydroxyacetone phosphate. His208 contacts Zn(2+). Residues 209–211 (GAS) and 230–233 (NVAT) contribute to the dihydroxyacetone phosphate site.

It belongs to the class II fructose-bisphosphate aldolase family. TagBP aldolase GatY subfamily. In terms of assembly, forms a complex with GatZ. Requires Zn(2+) as cofactor.

It catalyses the reaction D-tagatofuranose 1,6-bisphosphate = D-glyceraldehyde 3-phosphate + dihydroxyacetone phosphate. Its pathway is carbohydrate metabolism; D-tagatose 6-phosphate degradation; D-glyceraldehyde 3-phosphate and glycerone phosphate from D-tagatose 6-phosphate: step 2/2. Its function is as follows. Catalytic subunit of the tagatose-1,6-bisphosphate aldolase GatYZ, which catalyzes the reversible aldol condensation of dihydroxyacetone phosphate (DHAP or glycerone-phosphate) with glyceraldehyde 3-phosphate (G3P) to produce tagatose 1,6-bisphosphate (TBP). Requires GatZ subunit for full activity and stability. Is involved in the catabolism of galactitol. The chain is D-tagatose-1,6-bisphosphate aldolase subunit GatY from Shigella flexneri serotype 5b (strain 8401).